Here is a 389-residue protein sequence, read N- to C-terminus: Formate-dependent phosphoribosylglycinamide formyltransferase (389 aa).

Residues 12-13 and glutamate 72 contribute to the N(1)-(5-phospho-beta-D-ribosyl)glycinamide site; that span reads EL. ATP contacts are provided by residues arginine 104, lysine 145, 150 to 155, 185 to 188, and glutamate 193; these read SSGKGQ and EEFI. An ATP-grasp domain is found at 109-301; sequence DLAAKELGLK…EFELHLRAVL (193 aa). 2 residues coordinate Mg(2+): glutamate 258 and glutamate 271. Residues aspartate 278, lysine 350, and 357–358 contribute to the N(1)-(5-phospho-beta-D-ribosyl)glycinamide site; that span reads RR.

The protein belongs to the PurK/PurT family. In terms of assembly, homodimer.

The catalysed reaction is N(1)-(5-phospho-beta-D-ribosyl)glycinamide + formate + ATP = N(2)-formyl-N(1)-(5-phospho-beta-D-ribosyl)glycinamide + ADP + phosphate + H(+). Its pathway is purine metabolism; IMP biosynthesis via de novo pathway; N(2)-formyl-N(1)-(5-phospho-D-ribosyl)glycinamide from N(1)-(5-phospho-D-ribosyl)glycinamide (formate route): step 1/1. Functionally, involved in the de novo purine biosynthesis. Catalyzes the transfer of formate to 5-phospho-ribosyl-glycinamide (GAR), producing 5-phospho-ribosyl-N-formylglycinamide (FGAR). Formate is provided by PurU via hydrolysis of 10-formyl-tetrahydrofolate. This is Formate-dependent phosphoribosylglycinamide formyltransferase from Phocaeicola vulgatus (strain ATCC 8482 / DSM 1447 / JCM 5826 / CCUG 4940 / NBRC 14291 / NCTC 11154) (Bacteroides vulgatus).